The sequence spans 274 residues: 2,3,4,5-tetrahydropyridine-2,6-dicarboxylate N-succinyltransferase (274 aa).

Substrate is bound by residues arginine 106 and aspartate 143.

The protein belongs to the transferase hexapeptide repeat family. As to quaternary structure, homotrimer.

It is found in the cytoplasm. The enzyme catalyses (S)-2,3,4,5-tetrahydrodipicolinate + succinyl-CoA + H2O = (S)-2-succinylamino-6-oxoheptanedioate + CoA. It participates in amino-acid biosynthesis; L-lysine biosynthesis via DAP pathway; LL-2,6-diaminopimelate from (S)-tetrahydrodipicolinate (succinylase route): step 1/3. In Rickettsia felis (strain ATCC VR-1525 / URRWXCal2) (Rickettsia azadi), this protein is 2,3,4,5-tetrahydropyridine-2,6-dicarboxylate N-succinyltransferase.